A 331-amino-acid polypeptide reads, in one-letter code: Nodulation protein D 2 (331 aa).

One can recognise an HTH lysR-type domain in the interval 6–63 (LDLNLLVALDALMTERSLTAAARKINLSQPAMSAAVARLRSYFRDELFAMRGRKLVPT). Positions 23–42 (LTAAARKINLSQPAMSAAVA) form a DNA-binding region, H-T-H motif.

This sequence belongs to the LysR transcriptional regulatory family.

Its function is as follows. NodD regulates the expression of the nodABCFE genes which encode other nodulation proteins. NodD is also a negative regulator of its own expression. Binds flavonoids as inducers. The sequence is that of Nodulation protein D 2 (nodD2) from Bradyrhizobium elkanii.